Reading from the N-terminus, the 312-residue chain is Bifunctional pinoresinol-lariciresinol reductase 1 (312 aa).

NADP(+) is bound by residues 10–16 (GGTGYIG), Arg35, and Lys44. Lys136 (proton acceptor) is an active-site residue. Arg140 contributes to the NADP(+) binding site. His268 is a binding site for substrate.

Belongs to the NmrA-type oxidoreductase family. Isoflavone reductase subfamily. In terms of assembly, dimer. In terms of tissue distribution, expressed in seeds and roots, but not in stems. Detected in leaves.

The enzyme catalyses (-)-lariciresinol + NADP(+) = (-)-pinoresinol + NADPH + H(+). It carries out the reaction (+)-secoisolariciresinol + NADP(+) = (-)-lariciresinol + NADPH + H(+). Reductase involved in lignan biosynthesis. Catalyzes the enantioselective conversion of (-)-pinoresinol into (-)-lariciresinol and of (-)-lariciresinol into (+)-secoisolariciresinol. Abstracts the 4R-hydride from the NADPH cofactor during catalysis. This Linum usitatissimum (Flax) protein is Bifunctional pinoresinol-lariciresinol reductase 1 (PLR_Lu1).